Here is a 735-residue protein sequence, read N- to C-terminus: Ion-translocating oxidoreductase complex subunit C (735 aa).

4Fe-4S ferredoxin-type domains lie at 368 to 397 (MGAP…QQLY) and 407 to 436 (KATA…VQYF). [4Fe-4S] cluster is bound by residues Cys-377, Cys-380, Cys-383, Cys-387, Cys-416, Cys-419, Cys-422, and Cys-426. The tract at residues 562–713 (AIARAKARKQ…AEPADPRKAA (152 aa)) is disordered.

This sequence belongs to the 4Fe4S bacterial-type ferredoxin family. RnfC subfamily. In terms of assembly, the complex is composed of six subunits: RsxA, RsxB, RsxC, RsxD, RsxE and RsxG. Requires [4Fe-4S] cluster as cofactor.

It localises to the cell inner membrane. Functionally, part of a membrane-bound complex that couples electron transfer with translocation of ions across the membrane. Required to maintain the reduced state of SoxR. This is Ion-translocating oxidoreductase complex subunit C from Salmonella newport (strain SL254).